Consider the following 461-residue polypeptide: Cysteine--tRNA ligase (461 aa).

C28 contributes to the Zn(2+) binding site. Residues 30–40 carry the 'HIGH' region motif; it reads ITIYDLCHIGH. The Zn(2+) site is built by C209, H234, and E238. Positions 266–270 match the 'KMSKS' region motif; the sequence is KMSKS. ATP is bound at residue K269.

It belongs to the class-I aminoacyl-tRNA synthetase family. As to quaternary structure, monomer. The cofactor is Zn(2+).

The protein localises to the cytoplasm. The catalysed reaction is tRNA(Cys) + L-cysteine + ATP = L-cysteinyl-tRNA(Cys) + AMP + diphosphate. The protein is Cysteine--tRNA ligase of Yersinia enterocolitica serotype O:8 / biotype 1B (strain NCTC 13174 / 8081).